Consider the following 692-residue polypeptide: Glycine--tRNA ligase beta subunit (692 aa).

Belongs to the class-II aminoacyl-tRNA synthetase family. Tetramer of two alpha and two beta subunits.

The protein localises to the cytoplasm. The catalysed reaction is tRNA(Gly) + glycine + ATP = glycyl-tRNA(Gly) + AMP + diphosphate. The polypeptide is Glycine--tRNA ligase beta subunit (Alteromonas mediterranea (strain DSM 17117 / CIP 110805 / LMG 28347 / Deep ecotype)).